A 487-amino-acid polypeptide reads, in one-letter code: MVPVIALVGRPNVGKSTMFNRLTKTRDAIVGDLSGLTRDRQYGDASWQGRSFILIDTGGITGDEVGMDEKMAEQSLMAIEEADYVLFLVDARAGMTAADQMIAEHLRKRNKAAILVANKIDNIDPDVARAEFSPMGMGNAIPVAGSQGRGISALMEAVLGHLPRDAEDEALEQDVAEGEEAVRIPGPSEKDGIKIAIIGRPNVGKSTLVNRMLGEERVVVYDEPGTTRDSIYIPFERDGDKYTFIDTAGVRKRGKIHEEVEKFSVVKTLQAIKDANVVIFVMDAREGVVDHDLNLLGFALEAGRAIVIALNKWDGMEPGERAYVKTELERRLFFVDFADIHFISALHGTGVGNLYKSVQAAFQSAVTRWPTSRLTQILEDAVSEHQPPMVNGRRIKLRYAHLGGANPPLIVIHGNQTDSIPKSYSRYLENTYRRVLKLVGTPIRIEYKGGENPYEGKKNTLTDRQVNKKRRLMSHHKKAEKKRRDKR.

EngA-type G domains follow at residues 3 to 166 and 193 to 366; these read PVIA…PRDA and IKIA…QSAV. Residues 9 to 16, 56 to 60, 118 to 121, 199 to 206, 246 to 250, and 311 to 314 contribute to the GTP site; these read GRPNVGKS, DTGGI, NKID, DTAGV, and NKWD. A KH-like domain is found at 367–451; that stretch reads TRWPTSRLTQ…PIRIEYKGGE (85 aa). Positions 448–461 are enriched in basic and acidic residues; sequence KGGENPYEGKKNTL. The disordered stretch occupies residues 448 to 487; it reads KGGENPYEGKKNTLTDRQVNKKRRLMSHHKKAEKKRRDKR. The span at 467-487 shows a compositional bias: basic residues; sequence NKKRRLMSHHKKAEKKRRDKR.

The protein belongs to the TRAFAC class TrmE-Era-EngA-EngB-Septin-like GTPase superfamily. EngA (Der) GTPase family. As to quaternary structure, associates with the 50S ribosomal subunit.

GTPase that plays an essential role in the late steps of ribosome biogenesis. This is GTPase Der from Pseudomonas putida (strain ATCC 700007 / DSM 6899 / JCM 31910 / BCRC 17059 / LMG 24140 / F1).